Here is an 83-residue protein sequence, read N- to C-terminus: Large ribosomal subunit protein bL27c (83 aa).

Residues Met1–Lys24 form a disordered region.

This sequence belongs to the bacterial ribosomal protein bL27 family.

Its subcellular location is the plastid. The protein localises to the chloroplast. The chain is Large ribosomal subunit protein bL27c (rpl27) from Trieres chinensis (Marine centric diatom).